A 248-amino-acid chain; its full sequence is Probable transcriptional regulatory protein trd_1132 (248 aa).

This sequence belongs to the TACO1 family.

It localises to the cytoplasm. In Thermomicrobium roseum (strain ATCC 27502 / DSM 5159 / P-2), this protein is Probable transcriptional regulatory protein trd_1132.